The chain runs to 360 residues: RGG repeats nuclear RNA binding protein B (360 aa).

Disordered stretches follow at residues 1 to 216 (MASV…DKEM) and 250 to 360 (MQQL…TLGK). Ala-2 carries the post-translational modification N-acetylalanine. Residues 58–77 (PGGGRGAGRGGSYGRGGRGG) show a composition bias toward gly residues. Basic and acidic residues-rich tracts occupy residues 99-108 (RRSEEGDGAR) and 132-157 (DSER…RDGA). Residues 162–176 (WGTTQDDITPVTEES) show a composition bias toward polar residues. Basic and acidic residues-rich tracts occupy residues 184–216 (LTVE…DKEM), 258–283 (SNND…EKTR), and 311–336 (REGR…RNQR). An FF domain is found at 223 to 288 (KVLEEKKKAL…EEKTRKSLSI (66 aa)). The residue at position 258 (Ser-258) is a Phosphoserine.

The protein belongs to the SERBP1-HABP4 family.

It is found in the nucleus. The protein resides in the cytoplasm. It localises to the perinuclear region. Its function is as follows. Ribosome-binding protein that acts as a regulator of mRNA translation by promoting ribosome inactivation. Binds RNA. The sequence is that of RGG repeats nuclear RNA binding protein B from Arabidopsis thaliana (Mouse-ear cress).